We begin with the raw amino-acid sequence, 384 residues long: 5-cytosine rRNA methyltransferase NSUN4 (384 aa).

Residues 1–25 constitute a mitochondrion transit peptide; the sequence is MAALVVRGVRDMLKRADFATVPRRQ. 4 residues coordinate S-adenosyl-L-methionine: Gly-185, Gly-186, Lys-187, and Asp-204. Ser-206 carries the phosphoserine modification. 4 residues coordinate S-adenosyl-L-methionine: Arg-209, Asp-237, Gly-238, and Asp-255. Cys-310 (nucleophile) is an active-site residue.

Belongs to the class I-like SAM-binding methyltransferase superfamily. RsmB/NOP family. Heterodimer with MTERFD2/MTERF4; this interaction seems to be required for NSUN4 recruitment to the mitochondrial large ribosomal subunit.

The protein resides in the mitochondrion. The catalysed reaction is a cytidine in rRNA + S-adenosyl-L-methionine = a 5-methylcytidine in rRNA + S-adenosyl-L-homocysteine + H(+). The enzyme catalyses a cytidine in mRNA + S-adenosyl-L-methionine = a 5-methylcytidine in mRNA + S-adenosyl-L-homocysteine + H(+). Mitochondrial RNA cytosine C(5)-methyltransferase that methylates cytosine to 5-methylcytosine (m5C) in various RNAs, such as rRNAs, mRNAs and some long non-coding RNAs (lncRNAs). Involved in mitochondrial ribosome small subunit (SSU) maturation by catalyzing methylation of mitochondrial 12S rRNA; the function is independent of MTERFD2/MTERF4 and assembled mitochondrial ribosome large subunit (LSU). Targeted to LSU by MTERFD2/MTERF4 and probably is involved in a final step in ribosome biogenesis to ensure that SSU and LSU are assembled. In vitro can methylate 16S rRNA of the LSU; the methylation is enhanced by MTERFD/MTERF4. Also acts as a regulator of innate immunity by marking double-stranded mitochondrial RNAs(mt-dsRNAs) generated in response to stress: catalyzes m5C modification on mitochondrial RNAs, such as a mRNAs and lncRNAs, with a preference for the termini of light-strand lncRNAs, promoting their degradation and cytosolic release. Modified light-strand lncRNAs are then recognized by C1QBP reader and recruited to the mitochondrial degradosome complex, which promotes their degradation. The sequence is that of 5-cytosine rRNA methyltransferase NSUN4 (NSUN4) from Bos taurus (Bovine).